The primary structure comprises 454 residues: Rhizobactin siderophore biosynthesis protein RhbE (454 aa).

An FAD-binding site is contributed by alanine 7–proline 13.

The protein belongs to the lysine N(6)-hydroxylase/L-ornithine N(5)-oxygenase family. FAD is required as a cofactor.

It functions in the pathway siderophore biosynthesis; rhizobactin biosynthesis. The polypeptide is Rhizobactin siderophore biosynthesis protein RhbE (rhbE) (Rhizobium meliloti (strain 1021) (Ensifer meliloti)).